The primary structure comprises 319 residues: Cytochrome c biogenesis protein CcsA (319 aa).

8 helical membrane-spanning segments follow: residues 9–29 (ILTH…LISL), 48–68 (TFFC…HFPL), 71–91 (LYES…VPYF), 98–118 (LSTI…SGLL), 143–163 (MILG…LLVI), 225–245 (IISL…VWAN), 258–275 (ETWA…LHTR), and 286–306 (AIVA…VNLL).

The protein belongs to the CcmF/CycK/Ccl1/NrfE/CcsA family. May interact with Ccs1.

The protein resides in the plastid. Its subcellular location is the chloroplast thylakoid membrane. Functionally, required during biogenesis of c-type cytochromes (cytochrome c6 and cytochrome f) at the step of heme attachment. This Eucalyptus globulus subsp. globulus (Tasmanian blue gum) protein is Cytochrome c biogenesis protein CcsA.